We begin with the raw amino-acid sequence, 927 residues long: Probable dipeptidyl-aminopeptidase B (927 aa).

Disordered regions lie at residues 1 to 44 (MAPA…TTSI) and 58 to 101 (GHFE…KNDG). The Cytoplasmic portion of the chain corresponds to 1 to 108 (MAPAPGMAPY…NDGMNRGMRR (108 aa)). Composition is skewed to basic and acidic residues over residues 19 to 36 (HRPEHNDESTGRMSHESE) and 58 to 70 (GHFELDDHDPMKE). Residues 109–129 (TLIIVAGLLISAWVVGLFFYV) form a helical; Signal-anchor for type II membrane protein membrane-spanning segment. The Vacuolar segment spans residues 130 to 927 (SHKSYKPASQ…RSIQPILPIL (798 aa)). 2 N-linked (GlcNAc...) asparagine glycosylation sites follow: Asn365 and Asn530. Residue Ser769 is the Charge relay system of the active site. N-linked (GlcNAc...) asparagine glycosylation is present at Asn828. Active-site charge relay system residues include Asp846 and His879.

Belongs to the peptidase S9B family.

The protein localises to the vacuole membrane. It carries out the reaction Release of an N-terminal dipeptide, Xaa-Yaa-|-Zaa-, from a polypeptide, preferentially when Yaa is Pro, provided Zaa is neither Pro nor hydroxyproline.. Type IV dipeptidyl-peptidase which removes N-terminal dipeptides sequentially from polypeptides having unsubstituted N-termini provided that the penultimate residue is proline. The polypeptide is Probable dipeptidyl-aminopeptidase B (DAPB) (Podospora anserina (strain S / ATCC MYA-4624 / DSM 980 / FGSC 10383) (Pleurage anserina)).